A 60-amino-acid polypeptide reads, in one-letter code: UPF0337 protein asr1134 (60 aa).

2 stretches are compositionally biased toward basic and acidic residues: residues 1–18 and 29–60; these read MSLE…EGKA and PEDK…KKID. The interval 1–60 is disordered; it reads MSLEDRAKATGKNIEGKAQEALGNVTGDPEDKAEGKAKQAESEVRHGVEDVKDNVKKKID.

This sequence belongs to the UPF0337 (CsbD) family.

The sequence is that of UPF0337 protein asr1134 from Nostoc sp. (strain PCC 7120 / SAG 25.82 / UTEX 2576).